The following is a 201-amino-acid chain: GTP cyclohydrolase 1 (201 aa).

Zn(2+)-binding residues include cysteine 90, histidine 93, and cysteine 163.

It belongs to the GTP cyclohydrolase I family. Toroid-shaped homodecamer, composed of two pentamers of five dimers.

It catalyses the reaction GTP + H2O = 7,8-dihydroneopterin 3'-triphosphate + formate + H(+). The protein operates within cofactor biosynthesis; 7,8-dihydroneopterin triphosphate biosynthesis; 7,8-dihydroneopterin triphosphate from GTP: step 1/1. The polypeptide is GTP cyclohydrolase 1 (folE) (Streptomyces coelicolor (strain ATCC BAA-471 / A3(2) / M145)).